The following is a 185-amino-acid chain: Methanol dehydrogenase activator (185 aa).

This sequence belongs to the Nudix hydrolase family. In terms of assembly, homodimer. Mg(2+) serves as cofactor.

In terms of biological role, involved in the activation of the NAD-dependent methanol dehydrogenase (MDH). MDH activation by Act involves hydrolytic removal of the nicotinamide mononucleotide (NMN) moiety of the NAD cofactor, changing its ping-pong type of reaction mechanism into a ternary complex reaction mechanism. It requires the presence of magnesium ions and is also able to use ADP-ribose. The chain is Methanol dehydrogenase activator from Bacillus methanolicus.